Consider the following 262-residue polypeptide: Indole-3-glycerol phosphate synthase (262 aa).

The protein belongs to the TrpC family.

The catalysed reaction is 1-(2-carboxyphenylamino)-1-deoxy-D-ribulose 5-phosphate + H(+) = (1S,2R)-1-C-(indol-3-yl)glycerol 3-phosphate + CO2 + H2O. Its pathway is amino-acid biosynthesis; L-tryptophan biosynthesis; L-tryptophan from chorismate: step 4/5. This Thiobacillus denitrificans (strain ATCC 25259 / T1) protein is Indole-3-glycerol phosphate synthase.